Reading from the N-terminus, the 1062-residue chain is MPKRKDIHKIMVIGSGPIIIGQAAEFDYSGTQACLALREEGYQVVLVNSNPATIMTDTTIADKVYIEPLTVDSISRIIRQEYPDAILPTLGGQVGLNMALALAKTGILDELNIELLGTKLKSIEQAEDREQFKNLCKELGEPVPPSKTVNTVEAAVEFGDEIGYPIIVRPAFTMGGTGGGICHNRKELAEIAKNGLELSPVTECLIEKSIAGYKEIEFEVMRDHDDNAMIVCCMENFDPVGIHTGDSIVFSPSQTLSDKEYQMLRDCSLKLIRALKIEGGCNVQLALDPNSFDYDVIEVNPRVSRSSALASKATGYPIAKMAAKIAVGMTLDEIKNPVTGTTYAEFEPALDYVVCKIPRWPFDKFQKADRTLGTQMKATGEVMAIGRTAEEAMQKAVRSLEIDEKDLYSEEAHRASDDKLEQKLVKAQDDRLFYLAEAFRRGYSLEDVHELTKINFYFLDIVKHMIEMEKELKENKDEVDILRLAKKYGFSDPTIANLWGETADEVRDFRKAHGIIPVYKMVDTCAAEFESQTPYFYSTYDAENESHRSGKKSVIVIGSGPIRIGQGVEFDYATVHCVKALQKMGYEAIVINSNPETVSTDFSVSDKLYFEPLTLEDVLNVCDLEEPEGVIVQFGGQTSINLAAGLEAHGVKILGTTVKDVNRAEDRKLFDDIIKELKLNQPQGLTATTHEGVIEAAEKLGYPVLVRPSYVLGGKAMEIVYNKKELEEYLQDHVDIAADHPILVDDYLDGRECDVDAISDGYDVLLPGIMEHIEHAGVHSGDSMAVYPPQTFTDEIKEKITEVTKKLALTLNCVGIMNIQFIVRDGEVYVIEVNPRASRTVPFLSKITGIEMAQVATRVIMGESLKEQGYGDGLASEPDMISVKAPVFSFSKLADVDSYLGPEMKSTGEVMGSDHTFAKALYKAFAGAKMQLPENGNVLLTIEDRDKDKILPIAKRFARIGYRIFATKGTADFLKKNDLHVDLVTKVHEDEQADDNILNELRNNKIDLVINTMGHDIEKNSDGFIIRQMAIQQNVPLLTALDTADALLTALENRSFATDALQ.

The carboxyphosphate synthetic domain stretch occupies residues 1–401; it reads MPKRKDIHKI…AMQKAVRSLE (401 aa). The ATP site is built by Arg-129, Arg-169, Gly-175, Gly-176, Lys-208, Ile-210, Glu-215, Gly-241, Ile-242, His-243, Gln-284, and Glu-298. An ATP-grasp 1 domain is found at 133-327; that stretch reads KNLCKELGEP…IAKMAAKIAV (195 aa). Gln-284, Glu-298, and Asn-300 together coordinate Mg(2+). Mn(2+) is bound by residues Gln-284, Glu-298, and Asn-300. The interval 402 to 546 is oligomerization domain; sequence IDEKDLYSEE…YSTYDAENES (145 aa). A carbamoyl phosphate synthetic domain region spans residues 547–929; that stretch reads HRSGKKSVIV…ALYKAFAGAK (383 aa). Residues 671–861 enclose the ATP-grasp 2 domain; sequence DDIIKELKLN…MAQVATRVIM (191 aa). ATP-binding residues include Arg-707, Asp-746, Leu-748, Glu-752, Gly-777, Val-778, His-779, Ser-780, Gln-820, and Glu-832. Residues Gln-820, Glu-832, and Asn-834 each coordinate Mg(2+). Gln-820, Glu-832, and Asn-834 together coordinate Mn(2+). The MGS-like domain maps to 930-1062; it reads MQLPENGNVL…NRSFATDALQ (133 aa). An allosteric domain region spans residues 930-1062; sequence MQLPENGNVL…NRSFATDALQ (133 aa).

This sequence belongs to the CarB family. As to quaternary structure, composed of two chains; the small (or glutamine) chain promotes the hydrolysis of glutamine to ammonia, which is used by the large (or ammonia) chain to synthesize carbamoyl phosphate. Tetramer of heterodimers (alpha,beta)4. It depends on Mg(2+) as a cofactor. Mn(2+) is required as a cofactor.

The catalysed reaction is hydrogencarbonate + L-glutamine + 2 ATP + H2O = carbamoyl phosphate + L-glutamate + 2 ADP + phosphate + 2 H(+). It carries out the reaction hydrogencarbonate + NH4(+) + 2 ATP = carbamoyl phosphate + 2 ADP + phosphate + 2 H(+). It participates in amino-acid biosynthesis; L-arginine biosynthesis; carbamoyl phosphate from bicarbonate: step 1/1. Its pathway is pyrimidine metabolism; UMP biosynthesis via de novo pathway; (S)-dihydroorotate from bicarbonate: step 1/3. Its function is as follows. Large subunit of the glutamine-dependent carbamoyl phosphate synthetase (CPSase). CPSase catalyzes the formation of carbamoyl phosphate from the ammonia moiety of glutamine, carbonate, and phosphate donated by ATP, constituting the first step of 2 biosynthetic pathways, one leading to arginine and/or urea and the other to pyrimidine nucleotides. The large subunit (synthetase) binds the substrates ammonia (free or transferred from glutamine from the small subunit), hydrogencarbonate and ATP and carries out an ATP-coupled ligase reaction, activating hydrogencarbonate by forming carboxy phosphate which reacts with ammonia to form carbamoyl phosphate. The protein is Carbamoyl phosphate synthase large chain of Lactobacillus acidophilus (strain ATCC 700396 / NCK56 / N2 / NCFM).